The primary structure comprises 416 residues: 4-hydroxy-3-methylbut-2-en-1-yl diphosphate synthase (flavodoxin) (416 aa).

Residues cysteine 304, cysteine 307, cysteine 350, and glutamate 357 each coordinate [4Fe-4S] cluster.

Belongs to the IspG family. The cofactor is [4Fe-4S] cluster.

The enzyme catalyses (2E)-4-hydroxy-3-methylbut-2-enyl diphosphate + oxidized [flavodoxin] + H2O + 2 H(+) = 2-C-methyl-D-erythritol 2,4-cyclic diphosphate + reduced [flavodoxin]. It functions in the pathway isoprenoid biosynthesis; isopentenyl diphosphate biosynthesis via DXP pathway; isopentenyl diphosphate from 1-deoxy-D-xylulose 5-phosphate: step 5/6. Converts 2C-methyl-D-erythritol 2,4-cyclodiphosphate (ME-2,4cPP) into 1-hydroxy-2-methyl-2-(E)-butenyl 4-diphosphate. The sequence is that of 4-hydroxy-3-methylbut-2-en-1-yl diphosphate synthase (flavodoxin) from Agrobacterium fabrum (strain C58 / ATCC 33970) (Agrobacterium tumefaciens (strain C58)).